The sequence spans 2320 residues: Sperm-associated antigen 17 (2320 aa).

Basic and acidic residues-rich tracts occupy residues 139 to 171 and 199 to 210; these read DQQR…EKKV and RRGEDDEAKSYI. Disordered regions lie at residues 139–211, 388–407, 682–739, 894–928, 950–1001, 1084–1118, 1191–1221, 1334–1367, 1393–1416, 1983–2028, and 2080–2101; these read DQQR…SYID, IPEP…KAQY, AEQD…SMDQ, SASK…EKDK, EERL…AKTL, KEKE…EKVK, QGKG…EKKN, SSPD…KSET, DIIP…TTTP, KEAS…YENV, and TKES…EEPD. The segment covering 703-720 has biased composition (polar residues); that stretch reads VTGSTSNSTKPWNSSNRQ. A coiled-coil region spans residues 865–965; sequence EEAKYQEAKM…EKKAEKKGKD (101 aa). Composition is skewed to basic and acidic residues over residues 914-928 and 950-999; these read ELSD…EKDK and EERL…EPAK. Over residues 1090-1103 the composition is skewed to acidic residues; sequence NSEEEEEEEEEKEE. Basic and acidic residues-rich tracts occupy residues 1104 to 1118 and 1203 to 1221; these read VEEK…EKVK and KHKD…EKKN. 2 stretches are compositionally biased toward polar residues: residues 2012–2028 and 2082–2094; these read VNKS…YENV and ESVS…NVTR.

In terms of assembly, interacts (via the C-terminus) with SPAG6; the interaction probably occurs on polymerized microtubules. Highly expressed in testis, round spermatids, testicular sperm, epididymal sperm and in condensing spermatids (at protein level). Expressed in organs that contain cilia-bearing cells including brain, oviduct, lung, and uterus. Expressed in articular cartilage and bone.

It localises to the cytoplasm. It is found in the cytoskeleton. The protein resides in the flagellum axoneme. Its subcellular location is the cytoplasmic vesicle. The protein localises to the secretory vesicle. It localises to the acrosome. It is found in the golgi apparatus. In terms of biological role, component of the central pair apparatus of ciliary axonemes. Plays a critical role in the function and structure of motile cilia. May play a role in endochondral bone formation, most likely because of a function in primary cilia of chondrocytes and osteoblasts. Essential for normal spermatogenesis and male fertility. Required for normal manchette structure, transport of proteins along the manchette microtubules and formation of the sperm head and flagellum. Essential for sperm flagellum development and proper assembly of the respiratory motile cilia central pair apparatus, but not the brain ependymal cilia. The chain is Sperm-associated antigen 17 (Spag17) from Mus musculus (Mouse).